Here is a 274-residue protein sequence, read N- to C-terminus: Proteasome subunit beta (274 aa).

The propeptide at 1-52 (MPDPTGVAGRLPAVFMTPGTSSFTDFLSVAAPDLLPGARGPLPAPVTDAAHG) is removed in mature form; by autocatalysis. The active-site Nucleophile is Thr-53.

It belongs to the peptidase T1B family. As to quaternary structure, the 20S proteasome core is composed of 14 alpha and 14 beta subunits that assemble into four stacked heptameric rings, resulting in a barrel-shaped structure. The two inner rings, each composed of seven catalytic beta subunits, are sandwiched by two outer rings, each composed of seven alpha subunits. The catalytic chamber with the active sites is on the inside of the barrel. Has a gated structure, the ends of the cylinder being occluded by the N-termini of the alpha-subunits. Is capped by the proteasome-associated ATPase, ARC.

Its subcellular location is the cytoplasm. The catalysed reaction is Cleavage of peptide bonds with very broad specificity.. The protein operates within protein degradation; proteasomal Pup-dependent pathway. Its activity is regulated as follows. The formation of the proteasomal ATPase ARC-20S proteasome complex, likely via the docking of the C-termini of ARC into the intersubunit pockets in the alpha-rings, may trigger opening of the gate for substrate entry. Interconversion between the open-gate and close-gate conformations leads to a dynamic regulation of the 20S proteasome proteolysis activity. Its function is as follows. Component of the proteasome core, a large protease complex with broad specificity involved in protein degradation. The sequence is that of Proteasome subunit beta from Parafrankia sp. (strain EAN1pec).